Here is a 105-residue protein sequence, read N- to C-terminus: DNA-directed RNA polymerase subunit omega (105 aa).

Belongs to the RNA polymerase subunit omega family. In terms of assembly, the RNAP catalytic core consists of 2 alpha, 1 beta, 1 beta' and 1 omega subunit. When a sigma factor is associated with the core the holoenzyme is formed, which can initiate transcription.

It catalyses the reaction RNA(n) + a ribonucleoside 5'-triphosphate = RNA(n+1) + diphosphate. Its function is as follows. Promotes RNA polymerase assembly. Latches the N- and C-terminal regions of the beta' subunit thereby facilitating its interaction with the beta and alpha subunits. This Streptococcus pyogenes serotype M12 (strain MGAS2096) protein is DNA-directed RNA polymerase subunit omega.